A 447-amino-acid chain; its full sequence is Ribulose bisphosphate carboxylase large chain (447 aa).

Substrate is bound by residues asparagine 89 and threonine 139. Lysine 141 (proton acceptor) is an active-site residue. Lysine 143 contributes to the substrate binding site. Positions 167, 169, and 170 each coordinate Mg(2+). Lysine 167 carries the post-translational modification N6-carboxylysine. The Proton acceptor role is filled by histidine 260. Substrate contacts are provided by arginine 261, histidine 293, and serine 345.

The protein belongs to the RuBisCO large chain family. Type I subfamily. As to quaternary structure, heterohexadecamer of 8 large chains and 8 small chains; disulfide-linked. The disulfide link is formed within the large subunit homodimers. Mg(2+) serves as cofactor. In terms of processing, the disulfide bond which can form in the large chain dimeric partners within the hexadecamer appears to be associated with oxidative stress and protein turnover.

The protein localises to the plastid. It is found in the chloroplast. It catalyses the reaction 2 (2R)-3-phosphoglycerate + 2 H(+) = D-ribulose 1,5-bisphosphate + CO2 + H2O. It carries out the reaction D-ribulose 1,5-bisphosphate + O2 = 2-phosphoglycolate + (2R)-3-phosphoglycerate + 2 H(+). Functionally, ruBisCO catalyzes two reactions: the carboxylation of D-ribulose 1,5-bisphosphate, the primary event in carbon dioxide fixation, as well as the oxidative fragmentation of the pentose substrate in the photorespiration process. Both reactions occur simultaneously and in competition at the same active site. In Ligustrum vulgare (Common privet), this protein is Ribulose bisphosphate carboxylase large chain.